Here is a 130-residue protein sequence, read N- to C-terminus: Iron-sulfur cluster insertion protein ErpA (130 aa).

Positions 46, 116, and 118 each coordinate iron-sulfur cluster.

Belongs to the HesB/IscA family. As to quaternary structure, homodimer. It depends on iron-sulfur cluster as a cofactor.

Functionally, required for insertion of 4Fe-4S clusters for at least IspG. This is Iron-sulfur cluster insertion protein ErpA from Legionella pneumophila subsp. pneumophila (strain Philadelphia 1 / ATCC 33152 / DSM 7513).